A 177-amino-acid chain; its full sequence is ATP synthase subunit delta (177 aa).

It belongs to the ATPase delta chain family. As to quaternary structure, F-type ATPases have 2 components, F(1) - the catalytic core - and F(0) - the membrane proton channel. F(1) has five subunits: alpha(3), beta(3), gamma(1), delta(1), epsilon(1). F(0) has three main subunits: a(1), b(2) and c(10-14). The alpha and beta chains form an alternating ring which encloses part of the gamma chain. F(1) is attached to F(0) by a central stalk formed by the gamma and epsilon chains, while a peripheral stalk is formed by the delta and b chains.

Its subcellular location is the cell inner membrane. In terms of biological role, f(1)F(0) ATP synthase produces ATP from ADP in the presence of a proton or sodium gradient. F-type ATPases consist of two structural domains, F(1) containing the extramembraneous catalytic core and F(0) containing the membrane proton channel, linked together by a central stalk and a peripheral stalk. During catalysis, ATP synthesis in the catalytic domain of F(1) is coupled via a rotary mechanism of the central stalk subunits to proton translocation. Its function is as follows. This protein is part of the stalk that links CF(0) to CF(1). It either transmits conformational changes from CF(0) to CF(1) or is implicated in proton conduction. The protein is ATP synthase subunit delta of Shewanella loihica (strain ATCC BAA-1088 / PV-4).